Here is an 886-residue protein sequence, read N- to C-terminus: Alanine--tRNA ligase (886 aa).

Residues histidine 564, histidine 568, cysteine 666, and histidine 670 each coordinate Zn(2+).

This sequence belongs to the class-II aminoacyl-tRNA synthetase family. It depends on Zn(2+) as a cofactor.

The protein resides in the cytoplasm. It carries out the reaction tRNA(Ala) + L-alanine + ATP = L-alanyl-tRNA(Ala) + AMP + diphosphate. Catalyzes the attachment of alanine to tRNA(Ala) in a two-step reaction: alanine is first activated by ATP to form Ala-AMP and then transferred to the acceptor end of tRNA(Ala). Also edits incorrectly charged Ser-tRNA(Ala) and Gly-tRNA(Ala) via its editing domain. This Prochlorococcus marinus (strain AS9601) protein is Alanine--tRNA ligase.